A 270-amino-acid chain; its full sequence is Purine nucleoside phosphorylase BT_4389 (270 aa).

Positions 79, 124, and 141 each coordinate Zn(2+).

This sequence belongs to the purine nucleoside phosphorylase YfiH/LACC1 family. Homodimer. Requires Cu(2+) as cofactor. Zn(2+) serves as cofactor.

It carries out the reaction adenosine + phosphate = alpha-D-ribose 1-phosphate + adenine. The enzyme catalyses S-methyl-5'-thioadenosine + phosphate = 5-(methylsulfanyl)-alpha-D-ribose 1-phosphate + adenine. The catalysed reaction is inosine + phosphate = alpha-D-ribose 1-phosphate + hypoxanthine. It catalyses the reaction adenosine + H2O + H(+) = inosine + NH4(+). In terms of biological role, purine nucleoside enzyme that catalyzes the phosphorolysis of adenosine and inosine nucleosides, yielding D-ribose 1-phosphate and the respective free bases, adenine and hypoxanthine. Also catalyzes the phosphorolysis of S-methyl-5'-thioadenosine into adenine and S-methyl-5-thio-alpha-D-ribose 1-phosphate. Also has adenosine deaminase activity. The chain is Purine nucleoside phosphorylase BT_4389 from Bacteroides thetaiotaomicron (strain ATCC 29148 / DSM 2079 / JCM 5827 / CCUG 10774 / NCTC 10582 / VPI-5482 / E50).